Consider the following 236-residue polypeptide: Probable chemoreceptor glutamine deamidase CheD (236 aa).

The disordered stretch occupies residues 1-20 (MIEFGKRATPQSAADAVRGD).

It belongs to the CheD family.

It catalyses the reaction L-glutaminyl-[protein] + H2O = L-glutamyl-[protein] + NH4(+). In terms of biological role, probably deamidates glutamine residues to glutamate on methyl-accepting chemotaxis receptors (MCPs), playing an important role in chemotaxis. The polypeptide is Probable chemoreceptor glutamine deamidase CheD (Ralstonia pickettii (strain 12J)).